Consider the following 270-residue polypeptide: Myeloid leukemia factor 1 (270 aa).

A phosphoserine mark is found at Ser-6, Ser-8, Ser-32, and Ser-34. Residues 50–125 (RARNRMGHED…VGDEPPKVFQ (76 aa)) are interaction with COPS3. Disordered stretches follow at residues 127–148 (STQT…RDSD) and 221–247 (RSVA…AIEH). Residues 138 to 148 (KETRKALRDSD) show a composition bias toward basic and acidic residues.

Belongs to the MLF family. In terms of assembly, interacts with CENPU. Also interacts with NRBP1/MADM, YWHAZ/14-3-3-zeta and HNRPUL2/MANP. NRBP1 recruits a serine kinase which phosphorylates both itself and MLF1. Phosphorylated MLF1 then binds to YWHAZ and is retained in the cytoplasm. Retained in the nucleus by binding to HNRPUL2. Binds to COPS3/CSN3 which is required for suppression of COP1 and activation of p53. Post-translationally, phosphorylation is required for binding to YWHAZ.

Its subcellular location is the cytoplasm. It localises to the nucleus. It is found in the cell projection. The protein resides in the cilium. The protein localises to the cytoskeleton. Its subcellular location is the cilium basal body. Involved in lineage commitment of primary hemopoietic progenitors by restricting erythroid formation and enhancing myeloid formation. Interferes with erythropoietin-induced erythroid terminal differentiation by preventing cells from exiting the cell cycle through suppression of CDKN1B/p27Kip1 levels. Suppresses COP1 activity via CSN3 which activates p53 and induces cell cycle arrest. Binds DNA and affects the expression of a number of genes so may function as a transcription factor in the nucleus. The protein is Myeloid leukemia factor 1 (MLF1) of Bos taurus (Bovine).